The primary structure comprises 95 residues: Large ribosomal subunit protein uL23 (95 aa).

It belongs to the universal ribosomal protein uL23 family. Part of the 50S ribosomal subunit. Contacts protein L29, and trigger factor when it is bound to the ribosome.

Functionally, one of the early assembly proteins it binds 23S rRNA. One of the proteins that surrounds the polypeptide exit tunnel on the outside of the ribosome. Forms the main docking site for trigger factor binding to the ribosome. This chain is Large ribosomal subunit protein uL23, found in Pediococcus pentosaceus (strain ATCC 25745 / CCUG 21536 / LMG 10740 / 183-1w).